The primary structure comprises 312 residues: MSQYQQGYGDQTRRVDEYGNPLTSQGQVDQYGNPISGGGMTGATGHGHGHHQQHHGVGVDQTTGFGSNTGTGTGYGTHTGSGGTHTGGVGGYGTTTEYGSTNTGSGYGNTDIGGTGYGTGTGTGTTGYGATGGGTGVGYGGTGHDNRGVMDKIKEKIPGTDQNASTYGTGTGYGTTGIGHQQHGGDNRGVMDKIKEKIPGTDQNQYTHGTGTGTGTGYGTTGYGASGVGHQQHGEKGVMDKIKEKIPGTEQNTYGTGTGTGHGTTGYGSTGTGHGTTGYGDEQHHGEKKGIMEKIKEKLPGTGSCTGHGQGH.

Disordered stretches follow at residues 1–88 and 248–287; these read MSQY…HTGG and GTEQ…HHGE. The span at 21–30 shows a compositional bias: polar residues; the sequence is PLTSQGQVDQ. Positions 35–46 are enriched in gly residues; sequence ISGGGMTGATGH. The segment covering 55 to 66 has biased composition (low complexity); the sequence is HGVGVDQTTGFG. Composition is skewed to gly residues over residues 67–88 and 256–278; these read SNTG…HTGG and TGTG…GTTG.

This sequence belongs to the plant dehydrin family. Interacts with the leghemoglobin LB120-1 in the cytoplasm; this interaction leads to LB120-1 protection from denaturation under thermal and drought stresses. As to expression, expressed in nodules and roots.

The protein localises to the cytoplasm. Functionally, intrinsically disordered protein acting as a chaperone. Ensures leghemoglobins (e.g. LB120-1) protection from denaturation under thermal and drought stresses to delay root nodule nitrogenase inactivation and subsequent nodule senescence, thus supporting symbiotic nitrogen fixation (SNF). The sequence is that of Dehydrin CAS31 from Medicago truncatula (Barrel medic).